Reading from the N-terminus, the 286-residue chain is Homoserine kinase (286 aa).

P78–S88 is a binding site for ATP.

Belongs to the GHMP kinase family. Homoserine kinase subfamily.

It is found in the cytoplasm. It catalyses the reaction L-homoserine + ATP = O-phospho-L-homoserine + ADP + H(+). Its pathway is amino-acid biosynthesis; L-threonine biosynthesis; L-threonine from L-aspartate: step 4/5. Its function is as follows. Catalyzes the ATP-dependent phosphorylation of L-homoserine to L-homoserine phosphate. The sequence is that of Homoserine kinase from Streptococcus suis (strain 98HAH33).